We begin with the raw amino-acid sequence, 1352 residues long: Alpha-protein kinase 1 (1352 aa).

One can recognise an Arf-GAP domain in the interval 7–127; the sequence is DPNYGLLRSL…RWTSSLSTSD (121 aa). The C4-type zinc-finger motif lies at 25–48; the sequence is CAECNSANVPYVCIKLGVFICPTC. Disordered regions lie at residues 123–164, 219–380, 424–445, 457–484, 503–560, and 619–658; these read LSTS…NNNN, TQSQ…PQHH, QQQQQSPISNPFTSNNNSNSEP, HNHHHHQQQQHHKQQQQQQQQQQNGNNS, FVEE…GGVS, and IINNQNNQNNNNNNNTNNVMISPSPSPNPFLPTPTSTNQN. Over residues 237–246 the composition is skewed to polar residues; it reads GFSPFNSPRS. Low complexity-rich tracts occupy residues 268–287 and 298–318; these read NNSNNNNNNNNNNNNGNNGN and NNNNNNNNNTTTTTTTTNNNN. 2 stretches are compositionally biased toward polar residues: residues 329–352 and 359–379; these read KTFSESGEYQNTNGNQQLSGSGNS and HPTQSKSPSPSGTPHSLSPQH. A coiled-coil region spans residues 393–429; sequence TTQQQLQQQQLQLQQQLQQQLQQQQQQQQQQQQQQQS. Basic residues-rich tracts occupy residues 458–470 and 510–523; these read NHHHHQQQQHHKQ and HQHPHHLQHHRHHS. Low complexity predominate over residues 619-636; that stretch reads IINNQNNQNNNNNNNTNN. A coiled-coil region spans residues 689 to 781; sequence YIQQQQQQQQ…QQQQQQHINL (93 aa). Disordered stretches follow at residues 786-863 and 901-979; these read PLQS…TDED and TSPI…PDAR. The span at 799–812 shows a compositional bias: polar residues; the sequence is PQHSSSQYMNQQGY. The segment covering 821–859 has biased composition (low complexity); the sequence is QPQSPQQIQPQPLQQQIFQQVQQQQPQIPQQSPQPLQSS. Positions 906–915 are enriched in pro residues; the sequence is QQPPQPPQPV. Low complexity predominate over residues 931–965; it reads QQQNGPTVPQQQQQQQQQQQQQQQQQQQQQQQQQP. One can recognise an Alpha-type protein kinase domain in the interval 990 to 1194; that stretch reads RFDAKLGKWV…ICHYLGLSSV (205 aa). 1164–1169 provides a ligand contact to ATP; that stretch reads GKGNLG. Disordered stretches follow at residues 1198–1234 and 1279–1352; these read PANDESGTMPRPPSIGQSYVRPSAFPPNLQQSFSFNF and QQQQ…KLVS. Residues 1241–1320 adopt a coiled-coil conformation; sequence HVLEQLNQQQ…QQQQQQQQNG (80 aa). Positions 1279–1319 are enriched in low complexity; it reads QQQQQQQQQQQQQQQQNQQQNQQQNQQQQQQQQQQQQQQQN. The span at 1321–1332 shows a compositional bias: pro residues; that stretch reads HPPPQTPLPPTP. Positions 1334-1352 are enriched in basic and acidic residues; that stretch reads QKDKPKIEVFGDILRKLVS.

It belongs to the protein kinase superfamily. Alpha-type protein kinase family. ALPK subfamily.

This is Alpha-protein kinase 1 (ak1) from Dictyostelium discoideum (Social amoeba).